Here is a 391-residue protein sequence, read N- to C-terminus: 3-ketoacyl-CoA thiolase (391 aa).

The active-site Acyl-thioester intermediate is the C95. Catalysis depends on proton acceptor residues H347 and C377.

Belongs to the thiolase-like superfamily. Thiolase family. As to quaternary structure, heterotetramer of two alpha chains (FadB) and two beta chains (FadA).

The protein localises to the cytoplasm. The catalysed reaction is an acyl-CoA + acetyl-CoA = a 3-oxoacyl-CoA + CoA. It participates in lipid metabolism; fatty acid beta-oxidation. Functionally, catalyzes the final step of fatty acid oxidation in which acetyl-CoA is released and the CoA ester of a fatty acid two carbons shorter is formed. The sequence is that of 3-ketoacyl-CoA thiolase from Pseudomonas fragi.